A 464-amino-acid polypeptide reads, in one-letter code: Methionine aminopeptidase 2 (464 aa).

Residues 1–86 (MGSKTPGNHR…RKKKKKNTKE (86 aa)) form a disordered region. Positions 43-54 (GESEGGEDEDDD) are enriched in acidic residues. Positions 72-83 (KRNKRRKKKKKN) are enriched in basic residues. Residue H216 coordinates substrate. Positions 237, 248, and 317 each coordinate a divalent metal cation. H325 is a binding site for substrate. A divalent metal cation contacts are provided by E350 and E445.

Belongs to the peptidase M24A family. Methionine aminopeptidase eukaryotic type 2 subfamily. Co(2+) serves as cofactor. It depends on Zn(2+) as a cofactor. Mn(2+) is required as a cofactor. The cofactor is Fe(2+).

Its subcellular location is the cytoplasm. It carries out the reaction Release of N-terminal amino acids, preferentially methionine, from peptides and arylamides.. Functionally, cotranslationally removes the N-terminal methionine from nascent proteins. The N-terminal methionine is often cleaved when the second residue in the primary sequence is small and uncharged (Met-Ala-, Cys, Gly, Pro, Ser, Thr, or Val). The sequence is that of Methionine aminopeptidase 2 from Ajellomyces capsulatus (strain NAm1 / WU24) (Darling's disease fungus).